A 286-amino-acid chain; its full sequence is 2-hydroxy-6-oxo-6-phenylhexa-2,4-dienoate hydrolase (286 aa).

Substrate-binding positions include 42-43, Asn-51, Asn-111, Ser-180, and Arg-190; that span reads GG. His-265 functions as the Proton acceptor in the catalytic mechanism. Residue Trp-266 participates in substrate binding.

It belongs to the AB hydrolase superfamily. BphD family. As to quaternary structure, homodimer.

It carries out the reaction 2,6-dioxo-6-phenylhexa-3-enoate + H2O = 2-oxopent-4-enoate + benzoate + H(+). Its pathway is xenobiotic degradation; biphenyl degradation; 2-hydroxy-2,4-pentadienoate and benzoate from biphenyl: step 4/4. In terms of biological role, catalyzes an unusual C-C bond hydrolysis of 2-hydroxy-6-oxo-6-phenylhexa-2,4-dienoic acid (HOPDA) to produce benzoic acid and 2-hydroxy-2,4-pentadienoic acid (HPD). The sequence is that of 2-hydroxy-6-oxo-6-phenylhexa-2,4-dienoate hydrolase from Polaromonas naphthalenivorans (strain CJ2).